The chain runs to 175 residues: uncharacterized protein (175 aa).

This is an uncharacterized protein from Escherichia coli.